The sequence spans 239 residues: Ribosomal RNA small subunit methyltransferase G (239 aa).

Residues glycine 77, phenylalanine 82, 128–129 (AE), and arginine 147 contribute to the S-adenosyl-L-methionine site. The interval 219-239 (KNTPKKYPRKPGTPNKSPIEG) is disordered.

The protein belongs to the methyltransferase superfamily. RNA methyltransferase RsmG family.

The protein localises to the cytoplasm. Its function is as follows. Specifically methylates the N7 position of guanine in position 535 of 16S rRNA. This is Ribosomal RNA small subunit methyltransferase G from Bacillus subtilis (strain 168).